The following is a 247-amino-acid chain: 1-(5-phosphoribosyl)-5-[(5-phosphoribosylamino)methylideneamino] imidazole-4-carboxamide isomerase (247 aa).

D8 acts as the Proton acceptor in catalysis. D131 (proton donor) is an active-site residue.

It belongs to the HisA/HisF family.

It is found in the cytoplasm. It carries out the reaction 1-(5-phospho-beta-D-ribosyl)-5-[(5-phospho-beta-D-ribosylamino)methylideneamino]imidazole-4-carboxamide = 5-[(5-phospho-1-deoxy-D-ribulos-1-ylimino)methylamino]-1-(5-phospho-beta-D-ribosyl)imidazole-4-carboxamide. Its pathway is amino-acid biosynthesis; L-histidine biosynthesis; L-histidine from 5-phospho-alpha-D-ribose 1-diphosphate: step 4/9. This Cupriavidus metallidurans (strain ATCC 43123 / DSM 2839 / NBRC 102507 / CH34) (Ralstonia metallidurans) protein is 1-(5-phosphoribosyl)-5-[(5-phosphoribosylamino)methylideneamino] imidazole-4-carboxamide isomerase.